The chain runs to 890 residues: Protein FAM171A1 (890 aa).

The signal sequence occupies residues 1 to 21 (MSRSATLLLCLLGCHVWKAVT). Over 22-303 (KTLREPGAGA…VTQDITTYHT (282 aa)) the chain is Extracellular. N-linked (GlcNAc...) asparagine glycans are attached at residues asparagine 159, asparagine 190, and asparagine 194. Residues 304–324 (VFLLAILGGMAFILLVLLCLL) form a helical membrane-spanning segment. The Cytoplasmic segment spans residues 325–890 (LYYCRRKCLK…ERPLMAFNIK (566 aa)). Serine 358, serine 360, serine 371, serine 422, serine 443, and serine 525 each carry phosphoserine. 2 disordered regions span residues 730-759 (AGRN…RGDA) and 818-890 (EGSS…FNIK). Over residues 747 to 757 (NEPKSARKGRG) the composition is skewed to basic and acidic residues. Over residues 822 to 833 (RRSGGQLPSLQE) the composition is skewed to polar residues. A phosphoserine mark is found at serine 849 and serine 855. Over residues 858–869 (EEEEDDDDDDQG) the composition is skewed to acidic residues. The span at 870 to 883 (EDKKSPWQKREERP) shows a compositional bias: basic and acidic residues.

Belongs to the FAM171 family. In terms of assembly, interacts with ADAM10, NSG1 and OAZ1. Expressed in heart, brain, liver, skeletal muscle, kidney and pancreas. In brain, expressed by glia, pyramidal neurons and astrocytes (at protein level). Highly expressed in placental trophoblasts.

The protein localises to the cell membrane. Involved in the regulation of the cytoskeletal dynamics, plays a role in actin stress fiber formation. In Homo sapiens (Human), this protein is Protein FAM171A1.